We begin with the raw amino-acid sequence, 209 residues long: Uracil phosphoribosyltransferase (209 aa).

5-phospho-alpha-D-ribose 1-diphosphate is bound by residues R79, R104, and 131–139 (DPMLATGAS). Residues I194 and 199-201 (GDA) contribute to the uracil site. D200 is a binding site for 5-phospho-alpha-D-ribose 1-diphosphate.

Belongs to the UPRTase family. Mg(2+) serves as cofactor.

It catalyses the reaction UMP + diphosphate = 5-phospho-alpha-D-ribose 1-diphosphate + uracil. Its pathway is pyrimidine metabolism; UMP biosynthesis via salvage pathway; UMP from uracil: step 1/1. With respect to regulation, allosterically activated by GTP. Its function is as follows. Catalyzes the conversion of uracil and 5-phospho-alpha-D-ribose 1-diphosphate (PRPP) to UMP and diphosphate. This chain is Uracil phosphoribosyltransferase, found in Staphylococcus saprophyticus subsp. saprophyticus (strain ATCC 15305 / DSM 20229 / NCIMB 8711 / NCTC 7292 / S-41).